Reading from the N-terminus, the 436-residue chain is Bifunctional protein GlmU (436 aa).

The interval 1-226 (MNEISIIILA…ETNFMGINDK (226 aa)) is pyrophosphorylase. UDP-N-acetyl-alpha-D-glucosamine is bound by residues 9–12 (LAAG), Lys-23, Gln-75, and 82–83 (GT). Asp-105 contributes to the Mg(2+) binding site. UDP-N-acetyl-alpha-D-glucosamine contacts are provided by Gly-138, Glu-152, Asn-167, and Asn-224. Mg(2+) is bound at residue Asn-224. Residues 227 to 247 (FALSIAEEIMQNRIKENLMKN) are linker. The N-acetyltransferase stretch occupies residues 248-436 (GVIMSLPDTI…YKFFGKNDEK (189 aa)). Residues Arg-311 and Lys-328 each contribute to the UDP-N-acetyl-alpha-D-glucosamine site. His-339 functions as the Proton acceptor in the catalytic mechanism. Positions 342 and 353 each coordinate UDP-N-acetyl-alpha-D-glucosamine. Acetyl-CoA-binding positions include 362–363 (NY), Ser-381, Ala-399, and Arg-416.

This sequence in the N-terminal section; belongs to the N-acetylglucosamine-1-phosphate uridyltransferase family. The protein in the C-terminal section; belongs to the transferase hexapeptide repeat family. In terms of assembly, homotrimer. Mg(2+) is required as a cofactor.

The protein localises to the cytoplasm. It carries out the reaction alpha-D-glucosamine 1-phosphate + acetyl-CoA = N-acetyl-alpha-D-glucosamine 1-phosphate + CoA + H(+). It catalyses the reaction N-acetyl-alpha-D-glucosamine 1-phosphate + UTP + H(+) = UDP-N-acetyl-alpha-D-glucosamine + diphosphate. The protein operates within nucleotide-sugar biosynthesis; UDP-N-acetyl-alpha-D-glucosamine biosynthesis; N-acetyl-alpha-D-glucosamine 1-phosphate from alpha-D-glucosamine 6-phosphate (route II): step 2/2. It participates in nucleotide-sugar biosynthesis; UDP-N-acetyl-alpha-D-glucosamine biosynthesis; UDP-N-acetyl-alpha-D-glucosamine from N-acetyl-alpha-D-glucosamine 1-phosphate: step 1/1. Its pathway is bacterial outer membrane biogenesis; LPS lipid A biosynthesis. Functionally, catalyzes the last two sequential reactions in the de novo biosynthetic pathway for UDP-N-acetylglucosamine (UDP-GlcNAc). The C-terminal domain catalyzes the transfer of acetyl group from acetyl coenzyme A to glucosamine-1-phosphate (GlcN-1-P) to produce N-acetylglucosamine-1-phosphate (GlcNAc-1-P), which is converted into UDP-GlcNAc by the transfer of uridine 5-monophosphate (from uridine 5-triphosphate), a reaction catalyzed by the N-terminal domain. In Campylobacter fetus subsp. fetus (strain 82-40), this protein is Bifunctional protein GlmU.